The following is a 285-amino-acid chain: 2-dehydro-3-deoxyphosphooctonate aldolase (285 aa).

Belongs to the KdsA family.

The protein resides in the cytoplasm. The enzyme catalyses D-arabinose 5-phosphate + phosphoenolpyruvate + H2O = 3-deoxy-alpha-D-manno-2-octulosonate-8-phosphate + phosphate. Its pathway is carbohydrate biosynthesis; 3-deoxy-D-manno-octulosonate biosynthesis; 3-deoxy-D-manno-octulosonate from D-ribulose 5-phosphate: step 2/3. It functions in the pathway bacterial outer membrane biogenesis; lipopolysaccharide biosynthesis. The polypeptide is 2-dehydro-3-deoxyphosphooctonate aldolase (Polaromonas sp. (strain JS666 / ATCC BAA-500)).